The following is a 295-amino-acid chain: 33 kDa chaperonin (295 aa).

2 cysteine pairs are disulfide-bonded: Cys237/Cys239 and Cys270/Cys273.

This sequence belongs to the HSP33 family. Under oxidizing conditions two disulfide bonds are formed involving the reactive cysteines. Under reducing conditions zinc is bound to the reactive cysteines and the protein is inactive.

It is found in the cytoplasm. Redox regulated molecular chaperone. Protects both thermally unfolding and oxidatively damaged proteins from irreversible aggregation. Plays an important role in the bacterial defense system toward oxidative stress. The sequence is that of 33 kDa chaperonin from Shouchella clausii (strain KSM-K16) (Alkalihalobacillus clausii).